The sequence spans 249 residues: Sugar fermentation stimulation protein homolog (249 aa).

Belongs to the SfsA family.

The polypeptide is Sugar fermentation stimulation protein homolog (Synechococcus sp. (strain RCC307)).